A 316-amino-acid polypeptide reads, in one-letter code: Ribosomal RNA small subunit methyltransferase H (316 aa).

S-adenosyl-L-methionine is bound by residues 35–37 (GGH), D55, F79, D101, and Q108. The tract at residues 291 to 316 (ALKPSDQEVELNPRSRSSVLRVAEKL) is disordered.

It belongs to the methyltransferase superfamily. RsmH family.

Its subcellular location is the cytoplasm. It carries out the reaction cytidine(1402) in 16S rRNA + S-adenosyl-L-methionine = N(4)-methylcytidine(1402) in 16S rRNA + S-adenosyl-L-homocysteine + H(+). Functionally, specifically methylates the N4 position of cytidine in position 1402 (C1402) of 16S rRNA. The polypeptide is Ribosomal RNA small subunit methyltransferase H (Vibrio cholerae serotype O1 (strain ATCC 39315 / El Tor Inaba N16961)).